The chain runs to 150 residues: SsrA-binding protein (150 aa).

This sequence belongs to the SmpB family.

The protein resides in the cytoplasm. Its function is as follows. Required for rescue of stalled ribosomes mediated by trans-translation. Binds to transfer-messenger RNA (tmRNA), required for stable association of tmRNA with ribosomes. tmRNA and SmpB together mimic tRNA shape, replacing the anticodon stem-loop with SmpB. tmRNA is encoded by the ssrA gene; the 2 termini fold to resemble tRNA(Ala) and it encodes a 'tag peptide', a short internal open reading frame. During trans-translation Ala-aminoacylated tmRNA acts like a tRNA, entering the A-site of stalled ribosomes, displacing the stalled mRNA. The ribosome then switches to translate the ORF on the tmRNA; the nascent peptide is terminated with the 'tag peptide' encoded by the tmRNA and targeted for degradation. The ribosome is freed to recommence translation, which seems to be the essential function of trans-translation. This is SsrA-binding protein from Borreliella afzelii (strain PKo) (Borrelia afzelii).